The chain runs to 728 residues: Catalase-peroxidase 1 (728 aa).

Residues 91-218 (WHSAGTYRTA…LAAVQMGLIY (128 aa)) constitute a cross-link (tryptophyl-tyrosyl-methioninium (Trp-Tyr) (with M-244)). The active-site Proton acceptor is His92. The segment at residues 218-244 (YVNPEGPDGNPDPVAAAHDIRETFARM) is a cross-link (tryptophyl-tyrosyl-methioninium (Tyr-Met) (with W-91)). Residue His259 participates in heme b binding.

It belongs to the peroxidase family. Peroxidase/catalase subfamily. Homodimer or homotetramer. Requires heme b as cofactor. In terms of processing, formation of the three residue Trp-Tyr-Met cross-link is important for the catalase, but not the peroxidase activity of the enzyme.

It carries out the reaction H2O2 + AH2 = A + 2 H2O. It catalyses the reaction 2 H2O2 = O2 + 2 H2O. In terms of biological role, bifunctional enzyme with both catalase and broad-spectrum peroxidase activity. This is Catalase-peroxidase 1 from Burkholderia cenocepacia (strain ATCC BAA-245 / DSM 16553 / LMG 16656 / NCTC 13227 / J2315 / CF5610) (Burkholderia cepacia (strain J2315)).